The sequence spans 77 residues: Vacuolar ATPase assembly integral membrane protein VMA21 (77 aa).

Topologically, residues 1–8 are cytoplasmic; it reads MAVDVPTS. A helical membrane pass occupies residues 9–29; sequence VIVKLMFFTLAMVSFPVLTFF. At 30-41 the chain is on the lumenal side; that stretch reads VSQQYTSNTLVN. The chain crosses the membrane as a helical span at residues 42-62; that stretch reads GGLAALAANVVLFAYVIMAFS. Over 63 to 77 the chain is Cytoplasmic; the sequence is EDVPQSDGKESKKQQ. The Prevents secretion from ER signature appears at 74-77; it reads KKQQ.

This sequence belongs to the VMA21 family.

Its subcellular location is the endoplasmic reticulum membrane. It is found in the endoplasmic reticulum-Golgi intermediate compartment membrane. The protein localises to the cytoplasmic vesicle. The protein resides in the COPII-coated vesicle membrane. Required for the assembly of the V0 complex of the vacuolar ATPase (V-ATPase) in the endoplasmic reticulum. This chain is Vacuolar ATPase assembly integral membrane protein VMA21, found in Eremothecium gossypii (strain ATCC 10895 / CBS 109.51 / FGSC 9923 / NRRL Y-1056) (Yeast).